Consider the following 1374-residue polypeptide: MDISSFLLPQLLRKYQQDVYNIASKQNTLLVMRTGAGKTLLAVKLIKQKLEEQILIQESNLEHKKISVFLVNKVPLVFQQAEYIRSQLPAKVGMFYGELSIEMSEQLLTNIILKYNVIVITADLFYLFLARGFLSINDLNLIIFDECHHAIGNDAYARIMNDFYHRAKAVLSKKHFTLPRIFGMTASPFTGKKGNLYHRLYQWEQLFDSKAHVVSENELADYFCLPEESYVMYSNKLVVPPSDSIIKKCEETLQGCKLISRAVKTALAETIDMGLWFGEQVWLYLVDFVETKRLKKKALGKQLSDDEELAIDRLKIFVEDWKNNKYSDNGPRIPVFDSTDVTDKVFKLLELLKATYRKSDSVRTVIFVERKATAFTLSLFMKTLNLPNIRAHSFIGHGPSDQGEFSMTFRRQKDTLHKFKTGKYNVLIATAVAEEGIDVPSCNLVIRFNICRTVTQYVQSRGRARAMASKFLIFLNTEELLIHERILHEEKNLKFALSELSNSNIFDSLVCEERERVTDDIVYEVGETGALLTGLYAVSLLYNFCNTLSRDVYTRYYPTFTAQPCLSGWYCFEVELPKACKVPAAQGSPAKSIRKAKQNAAFIMCLDLIRMGLIDKHLKPLDFRRKIADLETLEEDELKDEGYIETYERYVPKSWMKVPEDITRCFVSLLYTDANEGDNHIFHPLVFVQAHSFPKIDSFILNSTVGPRVKIVLETIEDSFKIDSHLLELLKKSTRYLLQFGLSTSLEQQIPTPYWLAPLNLSCTDYRFLENLIDVDTIQNFFKLPEPVQNVTDLQSDTVLLVNPQSIYEQYAFEGFVNSEFMIPAKKKDKAPSALCKKLPLRLNYSLWGNRAKSIPKSQQVRSFYINDLYILPVSRHLKNSALLIPSILYHIENLLVASSFIEHFRLDCKIDTACQALTSAESQLNFDYDRLEFYGDCFLKLGASITVFLKFPDTQEYQLHFNRKKIISNCNLYKVAIDCELPKYALSTPLEIRHWCPYGFQKSTSDKCRYAVLQKLSVKRIADMVEASIGACLLDSGLDSALKICKSLSVGLLDISNWDEWNNYFDLNTYADSLRNVQFPYSSYIEETIGYSFKNKKLLHLAFIHPSMMSQQGIYENYQQLEFLGDAVLDYIIVQYLYKKYPNATSGELTDYKSFYVCNKSLSYIGFVLNLHKYIQHESAAMCDAIFEYQELIEAFRETASENPWFWFEIDSPKFISDTLEAMICAIFLDSGFSLQSLQFVLPLFLNSLGDATHTKAKGDIEHKVYQLLKDQGCEDFGTKCVIEEVKSSHKTLLNTELHLTKYYGFSFFRHGNIVAYGKSRKVANAKYIMKQRLLKLLEDKSNLLLYSCNCKFSKKKPSDEQIKGDGKVKSLT.

Residues 19–206 enclose the Helicase ATP-binding domain; sequence VYNIASKQNT…YHRLYQWEQL (188 aa). ATP is bound at residue 32–39; it reads MRTGAGKT. The DECH box signature appears at 145–148; sequence DECH. One can recognise a Helicase C-terminal domain in the interval 340–517; sequence DVTDKVFKLL…SLVCEERERV (178 aa). The Dicer dsRNA-binding fold domain occupies 537-628; the sequence is AVSLLYNFCN…KPLDFRRKIA (92 aa). 2 RNase III domains span residues 916–1038 and 1083–1233; these read QALT…LDSG and SSYI…LDSG. Positions 1123, 1219, and 1222 each coordinate Mg(2+). Residues 1263–1355 form a C-terminal dsRNA-binding fold region; sequence EHKVYQLLKD…LLYSCNCKFS (93 aa). 4 residues coordinate Zn(2+): Cys-1275, His-1312, Cys-1350, and Cys-1352.

The protein belongs to the helicase family. Dicer subfamily. Mg(2+) is required as a cofactor. The cofactor is Mn(2+).

It is found in the cytoplasm. It localises to the nucleus. Required for G1 arrest and mating in response to nitrogen starvation. Ago1 regulation of cytokinesis and cell cycle checkpoints occurs downstream of dcr1. Required, indirectly, for regulated hyperphosphorylation of cdc2. Functionally, has a role in the RNA interference (RNAi) pathway which is important for heterochromatin formation, accurate chromosome segregation, centromere cohesion and telomere function during mitosis and meiosis. Digests double-stranded RNA (dsRNA) producing 21 to 23 bp dsRNAs, so-called interfering RNAs (siRNA). Required for both post-transcriptional and transcriptional gene silencing. Required for silencing at the centromeres and for initiation of transcriptionally silent heterochromatin at the mating type locus. Promotes histone H3 'Lys-10' methylation necessary for centromere function. Required for recruitment of swi6 and cohesin to an ectopic dg repeat. This Schizosaccharomyces pombe (strain 972 / ATCC 24843) (Fission yeast) protein is Protein Dicer (dcr1).